We begin with the raw amino-acid sequence, 697 residues long: Serine/threonine-protein kinase tousled-like 2 (697 aa).

Disordered regions lie at residues Lys-27–Val-136 and Leu-289–Asn-315. Positions Asn-31 to Ser-44 are enriched in polar residues. Over residues Ser-46–Arg-62 the composition is skewed to basic and acidic residues. Low complexity predominate over residues Ser-111–Pro-131. 2 coiled-coil regions span residues Ala-264–Lys-293 and Phe-334–Glu-372. The Protein kinase domain maps to Tyr-387–Leu-666. ATP is bound by residues Leu-393–Val-401 and Lys-416. The Proton acceptor role is filled by Asp-517.

This sequence belongs to the protein kinase superfamily. Ser/Thr protein kinase family. As to quaternary structure, monomer. May form homodimers; homodimerization may enhance autophosphoylation and enzymatic activity. Heterodimer with TLK1. Requires Mg(2+) as cofactor. Phosphorylated. Autophosphorylated; phosphorylation promotes the assembly of higher order oligomers and enzymatic activity.

It is found in the nucleus. The protein resides in the nucleoplasm. The protein localises to the cytoplasm. It localises to the perinuclear region. Its subcellular location is the cytoskeleton. It carries out the reaction L-seryl-[protein] + ATP = O-phospho-L-seryl-[protein] + ADP + H(+). The enzyme catalyses L-threonyl-[protein] + ATP = O-phospho-L-threonyl-[protein] + ADP + H(+). In terms of biological role, serine/threonine-protein kinase involved in the process of chromatin assembly and probably also DNA replication, transcription, repair, and chromosome segregation. Negative regulator of amino acid starvation-induced autophagy. In Xenopus tropicalis (Western clawed frog), this protein is Serine/threonine-protein kinase tousled-like 2.